A 118-amino-acid chain; its full sequence is Large ribosomal subunit protein bL17 (118 aa).

The protein belongs to the bacterial ribosomal protein bL17 family. As to quaternary structure, part of the 50S ribosomal subunit. Contacts protein L32.

The protein is Large ribosomal subunit protein bL17 of Gemmatimonas aurantiaca (strain DSM 14586 / JCM 11422 / NBRC 100505 / T-27).